Reading from the N-terminus, the 415-residue chain is Serine hydroxymethyltransferase (415 aa).

(6S)-5,6,7,8-tetrahydrofolate is bound by residues L119 and 123 to 125 (GHL). K228 bears the N6-(pyridoxal phosphate)lysine mark.

It belongs to the SHMT family. In terms of assembly, homodimer. Pyridoxal 5'-phosphate serves as cofactor.

It localises to the cytoplasm. It carries out the reaction (6R)-5,10-methylene-5,6,7,8-tetrahydrofolate + glycine + H2O = (6S)-5,6,7,8-tetrahydrofolate + L-serine. It functions in the pathway one-carbon metabolism; tetrahydrofolate interconversion. The protein operates within amino-acid biosynthesis; glycine biosynthesis; glycine from L-serine: step 1/1. Functionally, catalyzes the reversible interconversion of serine and glycine with tetrahydrofolate (THF) serving as the one-carbon carrier. This reaction serves as the major source of one-carbon groups required for the biosynthesis of purines, thymidylate, methionine, and other important biomolecules. Also exhibits THF-independent aldolase activity toward beta-hydroxyamino acids, producing glycine and aldehydes, via a retro-aldol mechanism. The chain is Serine hydroxymethyltransferase from Coprothermobacter proteolyticus (strain ATCC 35245 / DSM 5265 / OCM 4 / BT).